The following is a 210-amino-acid chain: MTGLFITLEGPEGAGKSTNRDYLAAQLRAQGVQVLLTREPGGTPLAERVRELLLAPSDEAMSADTELLLVFAARAQHLAEVIRPALARGEVVLCDRFTDATYAYQGGGRGLSHQRIAALEQFVQGDLRPDLTLVFDLPVEIGLSRAAARGRLDRFEQEGRAFFDAVRSTYLERARAEPARYRLVDAAQTLADVQACLDTLLPQLLELQRG.

Position 10–17 (10–17) interacts with ATP; that stretch reads GPEGAGKS.

The protein belongs to the thymidylate kinase family.

The enzyme catalyses dTMP + ATP = dTDP + ADP. Its function is as follows. Phosphorylation of dTMP to form dTDP in both de novo and salvage pathways of dTTP synthesis. This chain is Thymidylate kinase, found in Pseudomonas syringae pv. syringae (strain B728a).